The chain runs to 327 residues: Fe-S cluster assembly protein DRE2 (327 aa).

The span at 1 to 14 shows a compositional bias: polar residues; the sequence is MSPATVTIDTTPDF. 2 disordered regions span residues 1–20 and 153–179; these read MSPA…GGAP and NKGE…AAAA. Residues 17-144 form an N-terminal SAM-like domain region; sequence GGAPHSTLLL…EKPAEEVAAV (128 aa). The linker stretch occupies residues 145–214; the sequence is PLKFLKKKNK…EDELMTEEDL (70 aa). Residues 164–179 show a composition bias toward low complexity; that stretch reads PAAATQPTAPAPAAAA. Residues C224, C235, C238, and C240 each contribute to the [2Fe-2S] cluster site. Positions 224–240 are fe-S binding site A; it reads CAPKPGKKRRACKDCTC. The [4Fe-4S] cluster site is built by C290, C293, C301, and C304. 2 short sequence motifs (cx2C motif) span residues 290 to 293 and 301 to 304; these read CGSC and CADC. The interval 290 to 304 is fe-S binding site B; that stretch reads CGSCALGDAFRCADC.

Belongs to the anamorsin family. Monomer. Interacts with TAH18. Interacts with MIA40. [2Fe-2S] cluster is required as a cofactor. [4Fe-4S] cluster serves as cofactor.

The protein resides in the cytoplasm. It is found in the mitochondrion intermembrane space. In terms of biological role, component of the cytosolic iron-sulfur (Fe-S) protein assembly (CIA) machinery required for the maturation of extramitochondrial Fe-S proteins. Part of an electron transfer chain functioning in an early step of cytosolic Fe-S biogenesis, facilitating the de novo assembly of a [4Fe-4S] cluster on the scaffold complex CFD1-NBP35. Electrons are transferred to DRE2 from NADPH via the FAD- and FMN-containing protein TAH18. TAH18-DRE2 are also required for the assembly of the diferric tyrosyl radical cofactor of ribonucleotide reductase (RNR), probably by providing electrons for reduction during radical cofactor maturation in the catalytic small subunit RNR2. This chain is Fe-S cluster assembly protein DRE2, found in Pyricularia oryzae (strain 70-15 / ATCC MYA-4617 / FGSC 8958) (Rice blast fungus).